The chain runs to 44 residues: Large ribosomal subunit protein bL34 (44 aa).

Residues 1 to 26 (MQRTLGGTNRKRKRTSGFRARMRTPD) form a disordered region. Positions 9 to 22 (NRKRKRTSGFRARM) are enriched in basic residues.

It belongs to the bacterial ribosomal protein bL34 family.

The sequence is that of Large ribosomal subunit protein bL34 from Trichormus variabilis (strain ATCC 29413 / PCC 7937) (Anabaena variabilis).